The chain runs to 277 residues: Ribosome-inactivating protein luffin-alpha (277 aa).

A signal peptide spans 1-19 (MKRFTVLILAIFVAASTVE). E179 is a catalytic residue.

The protein belongs to the ribosome-inactivating protein family. Type 1 RIP subfamily.

It catalyses the reaction Endohydrolysis of the N-glycosidic bond at one specific adenosine on the 28S rRNA.. The protein is Ribosome-inactivating protein luffin-alpha of Luffa aegyptiaca (Sponge gourd).